Here is a 20-residue protein sequence, read N- to C-terminus: Alkaline phosphatase (20 aa).

As to expression, expressed by the venom gland.

It localises to the secreted. It carries out the reaction a phosphate monoester + H2O = an alcohol + phosphate. Its function is as follows. Has hemorrhagic activity. The sequence is that of Alkaline phosphatase from Deinagkistrodon acutus (Hundred-pace snake).